A 172-amino-acid chain; its full sequence is RNA silencing suppressor p19 (172 aa).

Disordered regions lie at residues 1-38 and 152-172; these read MEGA…ESPG and VEGN…KESE. Basic and acidic residues-rich tracts occupy residues 9 to 20 and 159 to 172; these read DAREQANSERWD and GRPE…KESE.

This sequence belongs to the tombusvirus protein p19 family. As to quaternary structure, homodimer.

Its function is as follows. Viral suppressor of RNA silencing which binds specifically to silencing RNAs (siRNAs). Acts as a molecular caliper to specifically select siRNAs based on the length of the duplex region of the RNA. The polypeptide is RNA silencing suppressor p19 (Havel river virus (HaRV)).